The chain runs to 418 residues: Tyrosine--tRNA ligase 1 (418 aa).

Position 34 (Tyr34) interacts with L-tyrosine. The short motif at 39 to 48 (PTADSLHIGH) is the 'HIGH' region element. L-tyrosine is bound by residues Tyr169 and Gln173. The 'KMSKS' region signature appears at 230-234 (KFGKT). An ATP-binding site is contributed by Lys233. Residues 352-418 (TVLIDLLVES…GKKKYFLIRY (67 aa)) enclose the S4 RNA-binding domain.

It belongs to the class-I aminoacyl-tRNA synthetase family. TyrS type 1 subfamily. Homodimer.

The protein localises to the cytoplasm. The catalysed reaction is tRNA(Tyr) + L-tyrosine + ATP = L-tyrosyl-tRNA(Tyr) + AMP + diphosphate + H(+). Functionally, catalyzes the attachment of tyrosine to tRNA(Tyr) in a two-step reaction: tyrosine is first activated by ATP to form Tyr-AMP and then transferred to the acceptor end of tRNA(Tyr). This Bacillus cereus (strain ATCC 14579 / DSM 31 / CCUG 7414 / JCM 2152 / NBRC 15305 / NCIMB 9373 / NCTC 2599 / NRRL B-3711) protein is Tyrosine--tRNA ligase 1.